A 288-amino-acid chain; its full sequence is ATP synthase gamma chain (288 aa).

The protein belongs to the ATPase gamma chain family. F-type ATPases have 2 components, CF(1) - the catalytic core - and CF(0) - the membrane proton channel. CF(1) has five subunits: alpha(3), beta(3), gamma(1), delta(1), epsilon(1). CF(0) has three main subunits: a, b and c.

The protein localises to the cell inner membrane. Produces ATP from ADP in the presence of a proton gradient across the membrane. The gamma chain is believed to be important in regulating ATPase activity and the flow of protons through the CF(0) complex. The protein is ATP synthase gamma chain of Vibrio parahaemolyticus serotype O3:K6 (strain RIMD 2210633).